The primary structure comprises 48 residues: Small, acid-soluble spore protein P (48 aa).

Residues 1 to 12 show a composition bias toward basic and acidic residues; it reads MTNKNTSKDMHK. The tract at residues 1-48 is disordered; sequence MTNKNTSKDMHKNAPKGHNPGQPEPLSGSKKVKNRNHTRQKHNTSHDM. A compositionally biased stretch (basic residues) spans 30-48; sequence KKVKNRNHTRQKHNTSHDM.

It belongs to the SspP family.

The protein resides in the spore core. In Bacillus velezensis (strain DSM 23117 / BGSC 10A6 / LMG 26770 / FZB42) (Bacillus amyloliquefaciens subsp. plantarum), this protein is Small, acid-soluble spore protein P.